We begin with the raw amino-acid sequence, 367 residues long: Phosphoribosylaminoimidazole-succinocarboxamide synthase (367 aa).

This sequence belongs to the SAICAR synthetase family.

The catalysed reaction is 5-amino-1-(5-phospho-D-ribosyl)imidazole-4-carboxylate + L-aspartate + ATP = (2S)-2-[5-amino-1-(5-phospho-beta-D-ribosyl)imidazole-4-carboxamido]succinate + ADP + phosphate + 2 H(+). It functions in the pathway purine metabolism; IMP biosynthesis via de novo pathway; 5-amino-1-(5-phospho-D-ribosyl)imidazole-4-carboxamide from 5-amino-1-(5-phospho-D-ribosyl)imidazole-4-carboxylate: step 1/2. The chain is Phosphoribosylaminoimidazole-succinocarboxamide synthase from Colwellia psychrerythraea (strain 34H / ATCC BAA-681) (Vibrio psychroerythus).